Consider the following 753-residue polypeptide: Lysyl oxidase homolog 3 (753 aa).

An N-terminal signal peptide occupies residues 1–25 (MRPVSVWQWSPWGLLLCLLCSSCLG). SRCR domains lie at 44 to 145 (FRLA…VICK) and 169 to 282 (VRIR…VSCV). Disulfide bonds link cysteine 70–cysteine 134, cysteine 83–cysteine 144, cysteine 114–cysteine 124, cysteine 201–cysteine 271, cysteine 214–cysteine 281, and cysteine 248–cysteine 258. A glycan (N-linked (GlcNAc...) asparagine) is linked at asparagine 111. N-linked (GlcNAc...) asparagine glycosylation occurs at asparagine 266. Low complexity predominate over residues 290–302 (SSGQKKQQQSKPQ). The disordered stretch occupies residues 290–315 (SSGQKKQQQSKPQGEARVRLKGGAHP). SRCR domains are found at residues 307–407 (VRLK…VRCN) and 417–525 (IRLS…VICS). Intrachain disulfides connect cysteine 332–cysteine 396, cysteine 345–cysteine 406, cysteine 376–cysteine 386, cysteine 446–cysteine 511, cysteine 459–cysteine 524, cysteine 492–cysteine 502, cysteine 554–cysteine 560, cysteine 606–cysteine 654, cysteine 638–cysteine 644, cysteine 666–cysteine 676, and cysteine 713–cysteine 727. Residues asparagine 390 and asparagine 481 are each glycosylated (N-linked (GlcNAc...) asparagine). Residues 529-732 (SDLLLHSALV…WVHNCHIGDA (204 aa)) are lysyl-oxidase like. Residues histidine 607, histidine 609, and histidine 611 each contribute to the Cu cation site. A glycan (N-linked (GlcNAc...) asparagine) is linked at asparagine 625. A cross-link (lysine tyrosylquinone (Lys-Tyr)) is located at residues 634–670 (KASFCLEDTECQEDVSKRYECANFGEQGITVGCWDLY). 2',4',5'-topaquinone is present on tyrosine 670.

The protein belongs to the lysyl oxidase family. In terms of assembly, interacts with STAT3. Cu cation is required as a cofactor. Requires lysine tyrosylquinone residue as cofactor. Post-translationally, the lysine tyrosylquinone cross-link (LTQ) is generated by condensation of the epsilon-amino group of a lysine with a topaquinone produced by oxidation of tyrosine. As to expression, isoform 1: Predominantly detected in the heart, placenta, lung, and small intestine. Isoform 2: Highly detected in the kidney, pancreas, spleen, and thymus, and is absent in lung. In eye, present in all layers of corneas as well as in the limbus and conjunctiva (at protein level).

The protein resides in the secreted. It is found in the extracellular space. It localises to the cytoplasm. The protein localises to the nucleus. It catalyses the reaction L-lysyl-[protein] + O2 + H2O = (S)-2-amino-6-oxohexanoyl-[protein] + H2O2 + NH4(+). The enzyme catalyses N(6)-acetyl-L-lysyl-[protein] + O2 + H2O = acetamide + (S)-2-amino-6-oxohexanoyl-[protein] + H2O2. In terms of biological role, protein-lysine 6-oxidase that mediates the oxidation of peptidyl lysine residues to allysine in target proteins. Catalyzes the post-translational oxidative deamination of peptidyl lysine residues in precursors of elastin and different types of collagens, a prerequisite in the formation of cross-links between collagens and elastin. Required for somite boundary formation by catalyzing oxidation of fibronectin (FN1), enhancing integrin signaling in myofibers and their adhesion to the myotendinous junction (MTJ). Acts as a regulator of inflammatory response by inhibiting differentiation of naive CD4(+) T-cells into T-helper Th17 or regulatory T-cells (Treg): acts by interacting with STAT3 in the nucleus and catalyzing both deacetylation and oxidation of lysine residues on STAT3, leading to disrupt STAT3 dimerization and inhibit STAT3 transcription activity. Oxidation of lysine residues to allysine on STAT3 preferentially takes place on lysine residues that are acetylated. Also able to catalyze deacetylation of lysine residues on STAT3. Functionally, shows protein-lysine 6-oxidase activity toward elastin and different types of collagens, with the highest activity toward collagen type VIII. Its function is as follows. Shows protein-lysine 6-oxidase activity toward elastin and different types of collagens, with the highest activity toward collagen type IV. The polypeptide is Lysyl oxidase homolog 3 (Homo sapiens (Human)).